The primary structure comprises 458 residues: Zinc finger protein 239 (458 aa).

A Glycyl lysine isopeptide (Lys-Gly) (interchain with G-Cter in SUMO2) cross-link involves residue K108. The residue at position 191 (S191) is a Phosphoserine. 9 consecutive C2H2-type zinc fingers follow at residues 207 to 229, 235 to 257, 263 to 285, 291 to 313, 319 to 341, 347 to 369, 375 to 397, 403 to 425, and 431 to 453; these read YECSQCGKNFSQSSELLLHQRDH, YKCEQCGKGFTRSSSLLIHQAVH, YKCDKCGKGFTRSSSLLIHHAVH, YKCDKCGKGFSQSSKLHIHQRVH, YECEECGMSFSQRSNLHIHQRVH, YKCGECGKGFSQSSNLHIHRCIH, YQCYECGKGFSQSSDLRIHLRVH, YHCGKCGKGFSQSSKLLIHQRVH, and YECSKCGKGFSQSSNLHIHQRVH.

The protein belongs to the krueppel C2H2-type zinc-finger protein family.

The protein resides in the nucleus. In terms of biological role, may be involved in transcriptional regulation. This Homo sapiens (Human) protein is Zinc finger protein 239 (ZNF239).